The chain runs to 1993 residues: [F-actin]-monooxygenase MICAL3 (1993 aa).

The segment at 2–494 (EERKQETTNQ…RHLYDSGETK (493 aa)) is monooxygenase domain. FAD contacts are provided by residues Cys97, 116–118 (EKR), 123–125 (RNN), Phe183, Tyr298, and Asp398. The Calponin-homology (CH) domain maps to 518-624 (VARSSKLLGW…YLTQFYEMFK (107 aa)). Position 649 is a phosphoserine (Ser649). The disordered stretch occupies residues 658-704 (GQTISRKRSPKDKKEKDSDGAGKRRKTSQSEEEEPPRSYKGERPTLV). Positions 669–679 (DKKEKDSDGAG) are enriched in basic and acidic residues. Phosphoserine is present on residues Ser685 and Ser687. The region spanning 762–824 (DTCYFCQKRV…KPHYCYRLSG (63 aa)) is the LIM zinc-binding domain. Residues Cys764, Cys767, His785, Cys788, Cys791, Cys794, Cys814, and His817 each coordinate Zn(2+). A disordered region spans residues 854-886 (NGLASVAASSAERSPGTSMNGLEEPSIAKRLRG). Positions 860-873 (AASSAERSPGTSMN) are enriched in polar residues. At Thr887 the chain carries Phosphothreonine. Disordered regions lie at residues 905–1023 (ELEE…RLQQ), 1039–1309 (WTHI…LSGP), 1332–1546 (IRRS…FFTP), and 1559–1837 (KENG…EELK). The segment covering 938-951 (SEMEEEEEEDDEDD) has biased composition (acidic residues). The segment covering 975-988 (GRSEEELEASKNFE) has biased composition (basic and acidic residues). Ser977 bears the Phosphoserine mark. Residues 989-1014 (PEEEEEEEEYEEEDEEYEEEEEEESS) show a composition bias toward acidic residues. Basic and acidic residues predominate over residues 1039–1051 (WTHIREREAEERM). Acidic residues predominate over residues 1065 to 1090 (DEDDLEEDADSEPAETEGEAAEDGDP). The span at 1111–1148 (EAEHRLQSQAKVKAELELRVSENEEEKPSDAPKQEERG) shows a compositional bias: basic and acidic residues. Ser1131 and Ser1187 each carry phosphoserine. The segment covering 1199–1212 (LREKPKAEVPEEQK) has biased composition (basic and acidic residues). The segment covering 1230–1239 (SPTSPTSLQP) has biased composition (polar residues). A compositionally biased stretch (pro residues) spans 1245–1255 (PPTPPTPPPTQ). The segment covering 1257–1275 (PICSQPQPSSDASIPSPTK) has biased composition (polar residues). Position 1272 is a phosphoserine (Ser1272). Thr1274 is modified (phosphothreonine). A phosphoserine mark is found at Ser1276 and Ser1335. Thr1339 bears the Phosphothreonine mark. 2 positions are modified to phosphoserine: Ser1369 and Ser1382. Positions 1405 to 1420 (PSDKELRSSQEERRDL) are enriched in basic and acidic residues. Positions 1421–1433 (SSSSGLGLHDSSS) are enriched in low complexity. Position 1431 is a phosphoserine (Ser1431). Polar residues predominate over residues 1434–1452 (NMKTLGSQSFNTSDSTMLT). Thr1452 bears the Phosphothreonine mark. The segment covering 1454–1465 (PSSPPPPPPPNE) has biased composition (pro residues). Acidic residues predominate over residues 1516–1530 (SVDEIPFADDVEDTY). Over residues 1584 to 1600 (EAKELAEERMRAREKSV) the composition is skewed to basic and acidic residues. A compositionally biased stretch (polar residues) spans 1623–1633 (SSRSHTAQSQG). Ser1640 carries the post-translational modification Phosphoserine. Positions 1665-1685 (SPPSDSGGPDGSVTSSEGSSG) are enriched in low complexity. The span at 1686–1704 (KSKKRSSLFSPRRNKKEKK) shows a compositional bias: basic residues. Ser1692 and Ser1695 each carry phosphoserine. Positions 1754–1763 (TPSSGATVDS) are enriched in polar residues. Basic and acidic residues predominate over residues 1795–1811 (ILERSSQKSKREPRTYT). Residues 1817 to 1983 (AKLTRRVQKA…EEDKDLEAAM (167 aa)) adopt a coiled-coil conformation. A compositionally biased stretch (basic residues) spans 1819-1830 (LTRRVQKAARRQ). The bMERB domain maps to 1832–1981 (KQEELKRLHR…EKEEDKDLEA (150 aa)). Phosphoserine is present on Ser1903.

Belongs to the Mical family. In terms of assembly, interacts with RAB1B, RAB8A, RAB10, RAB13 and RAB15 (in their GTP-bound forms); binding to RAB1B is of low affinity compared to other Rab proteins; at least in case of RAB8A can bind 2 molecules of RAB8A simultaneously through a high and a low affinity binding site, respectively. Interacts with ERC1 and RAB8A; may bridge ERC1 with RAB8A. Interacts with KIF23 and ERC1; enhances the interaction between KIF23 and ERC1. Interacts with NINL. FAD is required as a cofactor.

It is found in the cytoplasm. The protein resides in the cell cortex. The protein localises to the cytoskeleton. It localises to the nucleus. Its subcellular location is the midbody. It is found in the spindle. The protein resides in the cilium basal body. The catalysed reaction is L-methionyl-[F-actin] + NADPH + O2 + H(+) = L-methionyl-(R)-S-oxide-[F-actin] + NADP(+) + H2O. In terms of biological role, monooxygenase that promotes depolymerization of F-actin by mediating oxidation of specific methionine residues on actin to form methionine-sulfoxide, resulting in actin filament disassembly and preventing repolymerization. In the absence of actin, it also functions as a NADPH oxidase producing H(2)O(2). Seems to act as Rab effector protein and play a role in vesicle trafficking. Involved in exocytic vesicles tethering and fusion: the monooxygenase activity is required for this process and implicates RAB8A associated with exocytotic vesicles. Required for cytokinesis. Contributes to stabilization and/or maturation of the intercellular bridge independently of its monooxygenase activity. Promotes recruitment of Rab8 and ERC1 to the intercellular bridge, and together these proteins are proposed to function in timely abscission. This chain is [F-actin]-monooxygenase MICAL3 (Mical3), found in Mus musculus (Mouse).